The following is a 344-amino-acid chain: tRNA N6-adenosine threonylcarbamoyltransferase (344 aa).

Residues His118 and His122 each contribute to the Fe cation site. Substrate-binding positions include 141 to 145 (TASGG), Asp174, Gly187, and Asn284. Asp312 is a binding site for Fe cation.

The protein belongs to the KAE1 / TsaD family. It depends on Fe(2+) as a cofactor.

The protein resides in the cytoplasm. It catalyses the reaction L-threonylcarbamoyladenylate + adenosine(37) in tRNA = N(6)-L-threonylcarbamoyladenosine(37) in tRNA + AMP + H(+). In terms of biological role, required for the formation of a threonylcarbamoyl group on adenosine at position 37 (t(6)A37) in tRNAs that read codons beginning with adenine. Is involved in the transfer of the threonylcarbamoyl moiety of threonylcarbamoyl-AMP (TC-AMP) to the N6 group of A37, together with TsaE and TsaB. TsaD likely plays a direct catalytic role in this reaction. The protein is tRNA N6-adenosine threonylcarbamoyltransferase of Desulfotalea psychrophila (strain LSv54 / DSM 12343).